A 400-amino-acid chain; its full sequence is Endoglucanase A (400 aa).

A signal peptide spans 1–32; the sequence is MTKTFKKFSIAGLALLFMATAAFAGWSTKASA. Catalysis depends on E187, which acts as the Proton donor. The Nucleophile role is filled by E328.

The protein belongs to the glycosyl hydrolase 5 (cellulase A) family.

Its subcellular location is the secreted. The catalysed reaction is Endohydrolysis of (1-&gt;4)-beta-D-glucosidic linkages in cellulose, lichenin and cereal beta-D-glucans.. Its activity is regulated as follows. Strongly inhibited by Hg(2+), Ag(+) and Fe(3+). To a lesser extent, is also inhibited by Pb(2+), Mn(2+), Sn(2+) and Cu(2+). By contrast, Ni(2+), Zn(2+), Co(2+), Ba(2+) and NH(4)(+) do not affect enzyme activity, while 10 mM Ca(2+), and Mg(2+) produce a stimulating effect. Is also strongly inhibited by chemicals such as N-bromosuccinimide and dimethyl(2-dihydroxy-5-nitrobenzyl)sulphonium bromide. Is not affected by N-acetylimidazole. In terms of biological role, endoglucanase with high activity on carboxymethylcellulose (CMC) and lichenan, but not active on Avicel. This is Endoglucanase A (celA) from Paenibacillus barcinonensis.